A 498-amino-acid chain; its full sequence is Lysine--tRNA ligase (498 aa).

Glu-408 and Glu-415 together coordinate Mg(2+).

Belongs to the class-II aminoacyl-tRNA synthetase family. Homodimer. Mg(2+) serves as cofactor.

It is found in the cytoplasm. The enzyme catalyses tRNA(Lys) + L-lysine + ATP = L-lysyl-tRNA(Lys) + AMP + diphosphate. This chain is Lysine--tRNA ligase, found in Listeria welshimeri serovar 6b (strain ATCC 35897 / DSM 20650 / CCUG 15529 / CIP 8149 / NCTC 11857 / SLCC 5334 / V8).